The sequence spans 122 residues: U1 small nuclear ribonucleoprotein C (122 aa).

The segment at 4 to 36 adopts a Matrin-type zinc-finger fold; that stretch reads YFCDYCDTYLTHDSPSVRKTHCSGRKHKDNVKM.

Belongs to the U1 small nuclear ribonucleoprotein C family. As to quaternary structure, U1 snRNP is composed of the 7 core Sm proteins B/B', D1, D2, D3, E, F and G that assemble in a heptameric protein ring on the Sm site of the small nuclear RNA to form the core snRNP, and at least 3 U1 snRNP-specific proteins U1-70K, U1-A and U1-C. U1-C interacts with U1 snRNA and the 5' splice-site region of the pre-mRNA.

Its subcellular location is the nucleus. Component of the spliceosomal U1 snRNP, which is essential for recognition of the pre-mRNA 5' splice-site and the subsequent assembly of the spliceosome. U1-C is directly involved in initial 5' splice-site recognition for both constitutive and regulated alternative splicing. The interaction with the 5' splice-site seems to precede base-pairing between the pre-mRNA and the U1 snRNA. Stimulates commitment or early (E) complex formation by stabilizing the base pairing of the 5' end of the U1 snRNA and the 5' splice-site region. The protein is U1 small nuclear ribonucleoprotein C of Ciona intestinalis (Transparent sea squirt).